The sequence spans 219 residues: uncharacterized protein (219 aa).

It belongs to the CIA30 family.

The protein localises to the cytoplasm. The protein resides in the nucleus. This is an uncharacterized protein from Schizosaccharomyces pombe (strain 972 / ATCC 24843) (Fission yeast).